The sequence spans 139 residues: von Hippel-Lindau-like protein (139 aa).

Residues 1-22 are disordered; the sequence is MPWRAGNGVGLEAQAGTQEAGP. A beta-domain region spans residues 54–135; it reads SRIIICNHSP…GQPVFANITL (82 aa).

The protein belongs to the VHL family. In terms of assembly, interacts via the beta domain with the ODD domain of HIF1A. This interaction is independent of prolyl hydroxylation of HIF1A. As to expression, abundantly expressed in the placenta.

Its function is as follows. Functions as a dominant-negative VHL to serve as a protector of HIFalpha. This is von Hippel-Lindau-like protein (VHLL) from Homo sapiens (Human).